The primary structure comprises 166 residues: RNA polymerase sigma factor SigV (166 aa).

Positions 38 to 51 (DIVQESIKKALSSV) match the Polymerase core binding motif. The H-T-H motif DNA-binding region spans 131–150 (LEEIAEITGENTNTVKTRLY).

It belongs to the sigma-70 factor family. ECF subfamily. As to quaternary structure, interacts with RsiV.

In terms of biological role, sigma factors are initiation factors that promote the attachment of RNA polymerase to specific initiation sites and are then released. Positively regulates the expression of proteins involved in stress responses against bacitracin, paraquat and tellurite. The chain is RNA polymerase sigma factor SigV (sigV) from Bacillus subtilis (strain 168).